Here is a 111-residue protein sequence, read N- to C-terminus: Gene 21 protein (111 aa).

In Mycobacterium (Mycobacteriophage L5), this protein is Gene 21 protein (21).